A 318-amino-acid polypeptide reads, in one-letter code: Thymidylate synthase (318 aa).

Residues R25 and 180 to 181 (RR) contribute to the dUMP site. C200 serves as the catalytic Nucleophile. DUMP-binding positions include 220-223 (RSGD), N231, and 261-263 (HIY). D223 provides a ligand contact to (6R)-5,10-methylene-5,6,7,8-tetrahydrofolate. Position 317 (A317) interacts with (6R)-5,10-methylene-5,6,7,8-tetrahydrofolate.

Belongs to the thymidylate synthase family. Bacterial-type ThyA subfamily. In terms of assembly, homodimer.

The protein resides in the cytoplasm. The catalysed reaction is dUMP + (6R)-5,10-methylene-5,6,7,8-tetrahydrofolate = 7,8-dihydrofolate + dTMP. Its pathway is pyrimidine metabolism; dTTP biosynthesis. Its function is as follows. Catalyzes the reductive methylation of 2'-deoxyuridine-5'-monophosphate (dUMP) to 2'-deoxythymidine-5'-monophosphate (dTMP) while utilizing 5,10-methylenetetrahydrofolate (mTHF) as the methyl donor and reductant in the reaction, yielding dihydrofolate (DHF) as a by-product. This enzymatic reaction provides an intracellular de novo source of dTMP, an essential precursor for DNA biosynthesis. The chain is Thymidylate synthase from Lactobacillus acidophilus (strain ATCC 700396 / NCK56 / N2 / NCFM).